The chain runs to 243 residues: MEKTEESVGIRVYTTTTTQNPSPTSSRSPKPVPLSSLPMLPAGAAAGGGKGRKRRMVAKGVQKTVSKTSMLVNFLPTGTLLMFEMVLPTIYRDGDCNGINTLMIHLLLLLCAMSCFFFHFTDSFKASDGKIYYGFVTPRGLAVFMKPPSPGFGGGDVIAEKEIPVTDERYKLRVNDFVHSVMSVLVFMAIAFSDRRVTGCLFPGKEKEMDQVMESFPLMVGIVCSALFLVFPTSRYGVGCMST.

A disordered region spans residues 1–37 (MEKTEESVGIRVYTTTTTQNPSPTSSRSPKPVPLSSL). Positions 14–29 (TTTTTQNPSPTSSRSP) are enriched in low complexity. 4 helical membrane passes run 70–90 (MLVN…LPTI), 98–118 (GINT…CFFF), 174–194 (VNDF…AFSD), and 212–232 (VMES…LVFP).

The protein belongs to the plant DMP1 protein family. Restricted to flowers.

It localises to the endoplasmic reticulum membrane. The protein localises to the vacuole membrane. Functionally, involved in membrane remodeling. This chain is Protein DMP8, found in Arabidopsis thaliana (Mouse-ear cress).